Here is a 227-residue protein sequence, read N- to C-terminus: DNA repair protein RecO (227 aa).

Belongs to the RecO family.

Involved in DNA repair and RecF pathway recombination. This is DNA repair protein RecO from Pseudomonas putida (strain W619).